The chain runs to 84 residues: UPF0473 protein CLI_2624 (84 aa).

This sequence belongs to the UPF0473 family.

This is UPF0473 protein CLI_2624 from Clostridium botulinum (strain Langeland / NCTC 10281 / Type F).